The primary structure comprises 458 residues: Bifunctional protein GlmU (458 aa).

Residues 1–230 form a pyrophosphorylase region; sequence MENRYAIILA…FDEAMGVNDR (230 aa). Residues 9-12, Lys-23, Gln-73, and 78-79 contribute to the UDP-N-acetyl-alpha-D-glucosamine site; these read LAAG and GT. Position 103 (Asp-103) interacts with Mg(2+). Residues Gly-140, Glu-155, Asn-170, and Asn-228 each coordinate UDP-N-acetyl-alpha-D-glucosamine. Asn-228 is a Mg(2+) binding site. The tract at residues 231 to 251 is linker; sequence VALSTANKIMHRRLNEMHMRN. The tract at residues 252–458 is N-acetyltransferase; it reads GVTFIDPDTT…YAKKLPYMKD (207 aa). UDP-N-acetyl-alpha-D-glucosamine-binding residues include Arg-333 and Lys-351. The active-site Proton acceptor is His-363. Tyr-366 and Asn-377 together coordinate UDP-N-acetyl-alpha-D-glucosamine. Residues 386–387, Ser-405, Ala-423, and Arg-440 contribute to the acetyl-CoA site; that span reads NY.

This sequence in the N-terminal section; belongs to the N-acetylglucosamine-1-phosphate uridyltransferase family. The protein in the C-terminal section; belongs to the transferase hexapeptide repeat family. As to quaternary structure, homotrimer. It depends on Mg(2+) as a cofactor.

Its subcellular location is the cytoplasm. The enzyme catalyses alpha-D-glucosamine 1-phosphate + acetyl-CoA = N-acetyl-alpha-D-glucosamine 1-phosphate + CoA + H(+). The catalysed reaction is N-acetyl-alpha-D-glucosamine 1-phosphate + UTP + H(+) = UDP-N-acetyl-alpha-D-glucosamine + diphosphate. Its pathway is nucleotide-sugar biosynthesis; UDP-N-acetyl-alpha-D-glucosamine biosynthesis; N-acetyl-alpha-D-glucosamine 1-phosphate from alpha-D-glucosamine 6-phosphate (route II): step 2/2. The protein operates within nucleotide-sugar biosynthesis; UDP-N-acetyl-alpha-D-glucosamine biosynthesis; UDP-N-acetyl-alpha-D-glucosamine from N-acetyl-alpha-D-glucosamine 1-phosphate: step 1/1. It functions in the pathway bacterial outer membrane biogenesis; LPS lipid A biosynthesis. Functionally, catalyzes the last two sequential reactions in the de novo biosynthetic pathway for UDP-N-acetylglucosamine (UDP-GlcNAc). The C-terminal domain catalyzes the transfer of acetyl group from acetyl coenzyme A to glucosamine-1-phosphate (GlcN-1-P) to produce N-acetylglucosamine-1-phosphate (GlcNAc-1-P), which is converted into UDP-GlcNAc by the transfer of uridine 5-monophosphate (from uridine 5-triphosphate), a reaction catalyzed by the N-terminal domain. This Enterococcus faecalis (strain ATCC 700802 / V583) protein is Bifunctional protein GlmU.